Reading from the N-terminus, the 216-residue chain is FMN-dependent NADH:quinone oxidoreductase (216 aa).

FMN contacts are provided by residues S10 and 15–17; that span reads SIS.

The protein belongs to the azoreductase type 1 family. Homodimer. It depends on FMN as a cofactor.

It carries out the reaction 2 a quinone + NADH + H(+) = 2 a 1,4-benzosemiquinone + NAD(+). The enzyme catalyses N,N-dimethyl-1,4-phenylenediamine + anthranilate + 2 NAD(+) = 2-(4-dimethylaminophenyl)diazenylbenzoate + 2 NADH + 2 H(+). Quinone reductase that provides resistance to thiol-specific stress caused by electrophilic quinones. In terms of biological role, also exhibits azoreductase activity. Catalyzes the reductive cleavage of the azo bond in aromatic azo compounds to the corresponding amines. The sequence is that of FMN-dependent NADH:quinone oxidoreductase from Nocardia farcinica (strain IFM 10152).